A 434-amino-acid chain; its full sequence is GTPase Obg (434 aa).

One can recognise an Obg domain in the interval 1–158 (MFLDTAKIKV…RELQLELKIL (158 aa)). Positions 159 to 336 (ADVGLVGFPS…LLDATAELLD (178 aa)) constitute an OBG-type G domain. GTP is bound by residues 165-172 (GFPSVGKS), 190-194 (FTTIV), 212-215 (DLPG), 282-285 (NKMD), and 317-319 (SGL). Mg(2+) contacts are provided by Ser172 and Thr192. Residues 356-434 (GFDEEEKAFE…IGKFEFEFVD (79 aa)) form the OCT domain.

Belongs to the TRAFAC class OBG-HflX-like GTPase superfamily. OBG GTPase family. In terms of assembly, monomer. Mg(2+) is required as a cofactor.

It localises to the cytoplasm. Its function is as follows. An essential GTPase which binds GTP, GDP and possibly (p)ppGpp with moderate affinity, with high nucleotide exchange rates and a fairly low GTP hydrolysis rate. Plays a role in control of the cell cycle, stress response, ribosome biogenesis and in those bacteria that undergo differentiation, in morphogenesis control. The chain is GTPase Obg from Streptococcus pneumoniae (strain Hungary19A-6).